The following is a 145-amino-acid chain: CASP-like protein SELMODRAFT_406854 (145 aa).

The Cytoplasmic portion of the chain corresponds to 1–31; the sequence is MGVASQSSVANEAGAAPEASIQQTLRGFSSP. The chain crosses the membrane as a helical span at residues 32–52; the sequence is TSLLLRIATAVLCTLTLAFLV. Residues 53-75 are Extracellular-facing; it reads TSKERKEIASIDIVAIWSNSKAL. The chain crosses the membrane as a helical span at residues 76–96; the sequence is IFLAVVSGICLGYSLLHAAVF. Residues 97 to 112 are Cytoplasmic-facing; that stretch reads LVMLSGNRKPLARKKA. Residues 113-133 traverse the membrane as a helical segment; the sequence is LDWMVFLADQVFFKIFCWFSI. At 134-145 the chain is on the extracellular side; that stretch reads RVSSRRSKAGFV.

This sequence belongs to the Casparian strip membrane proteins (CASP) family. As to quaternary structure, homodimer and heterodimers.

It localises to the cell membrane. The sequence is that of CASP-like protein SELMODRAFT_406854 from Selaginella moellendorffii (Spikemoss).